The sequence spans 205 residues: Small ribosomal subunit protein uS4 (205 aa).

The segment at 21–47 (GRPKSPFNKRDYGPGQHGQGRKGKPSD) is disordered. Residues 94 to 154 (RRLDSVVYRA…DKSKQLAIID (61 aa)) form the S4 RNA-binding domain.

Belongs to the universal ribosomal protein uS4 family. Part of the 30S ribosomal subunit. Contacts protein S5. The interaction surface between S4 and S5 is involved in control of translational fidelity.

Functionally, one of the primary rRNA binding proteins, it binds directly to 16S rRNA where it nucleates assembly of the body of the 30S subunit. In terms of biological role, with S5 and S12 plays an important role in translational accuracy. This is Small ribosomal subunit protein uS4 from Pelagibacter ubique (strain HTCC1062).